A 562-amino-acid polypeptide reads, in one-letter code: uncharacterized protein (562 aa).

A run of 5 helical transmembrane segments spans residues 4–26, 33–55, 59–78, 90–112, and 159–181; these read VRWIISTAPEIFLLLAVAIGTML, GFAIGTTACILIVSVLIGQLGTF, ALLRIVLFSLFVFTIGYKSG, LAQVAMALVLGGTGLVIVLAFAF, and IAAGYAVTYVLGYILTLLYVPFA. 2 consecutive RCK C-terminal domains span residues 207–287 and 295–375; these read PKTE…IIGT and LKAI…QVGQ. 6 consecutive transmembrane segments (helical) span residues 385 to 402, 406 to 428, 449 to 471, 476 to 498, 505 to 524, and 539 to 561; these read IAFLAAGIAAGLLAGLVS, GGIALTLGGGGGALIAGLLCGWL, LGLGGFIAAIGLANGHAAWVAIQ, LLVGMGLVVTLVPLVVATLFAYH, VITCGALAGAMTVDAAVTGA, and VPYAVGNVVLTVLGPIIVACTFV.

It belongs to the AAE transporter (TC 2.A.81) family.

It is found in the cell membrane. This is an uncharacterized protein from Bradyrhizobium diazoefficiens (strain JCM 10833 / BCRC 13528 / IAM 13628 / NBRC 14792 / USDA 110).